The primary structure comprises 461 residues: uncharacterized protein (461 aa).

Helical transmembrane passes span 13–33 (GIIFILDIVLFFVLLNVLPFE), 54–74 (ALHVTITALLVPLLAVALGLV), 81–101 (VGFADPTIFLFFGGFSLATAL), 120–140 (GNLFIAVIYLFLITAFLSMWM), 170–190 (VFVLLGIAYSASIGGMGTLVG), 211–231 (YGLPIMIILLPLMIGILYIIF), 256–276 (FIIFPVIALTWIFSGKINPFI), 286–306 (IASFDSIVALLAAIVICSTGV), 314–334 (SNTDWGVLMLFGGGLTLSAVL), 349–369 (FMIDGQHFYLIGLLVAAFIIF), 377–397 (TASAALLVPIFISIAQSLGMP), 399–419 (IGLALIIGIGASCAFMLPVAT), and 439–459 (VGFLLNLVCVVVIATMGYMFW).

The protein belongs to the SLC13A/DASS transporter (TC 2.A.47) family. NADC subfamily.

The protein resides in the cell membrane. This is an uncharacterized protein from Haemophilus influenzae (strain ATCC 51907 / DSM 11121 / KW20 / Rd).